The primary structure comprises 213 residues: Ras-related protein Rab-19 (213 aa).

Residues S24, V26, G27, K28, T29, C30, D42, and T47 each contribute to the GTP site. T29 is a binding site for Mg(2+). The Switch 1 signature appears at 37 to 52 (SGIFMDNQQNTIGVDF). Residues T47 and D70 each coordinate Mg(2+). The Switch 2 signature appears at 72-87 (AGQERFRTITQSYYRS). GTP is bound by residues G73, N128, K129, D131, S159, A160, and K161. Residues C211 and C213 are each lipidated (S-geranylgeranyl cysteine). Position 213 is a cysteine methyl ester (C213).

This sequence belongs to the small GTPase superfamily. Rab family. Mg(2+) is required as a cofactor.

The protein localises to the cell membrane. The catalysed reaction is GTP + H2O = GDP + phosphate + H(+). With respect to regulation, regulated by guanine nucleotide exchange factors (GEFs) which promote the exchange of bound GDP for free GTP. Regulated by GTPase activating proteins (GAPs) which increase the GTP hydrolysis activity. Inhibited by GDP dissociation inhibitors (GDIs). In terms of biological role, the small GTPases Rab are key regulators of intracellular membrane trafficking, from the formation of transport vesicles to their fusion with membranes. Rabs cycle between an inactive GDP-bound form and an active GTP-bound form that is able to recruit to membranes different set of downstream effectors directly responsible for vesicle formation, movement, tethering and fusion. In Xenopus laevis (African clawed frog), this protein is Ras-related protein Rab-19 (rab19).